A 488-amino-acid chain; its full sequence is Malonate-semialdehyde dehydrogenase (488 aa).

Positions 150, 152, 176, 179, 180, 229, and 251 each coordinate NAD(+). Catalysis depends on C284, which acts as the Nucleophile. Residue E382 participates in NAD(+) binding.

It belongs to the aldehyde dehydrogenase family. IolA subfamily. In terms of assembly, homotetramer.

The catalysed reaction is 3-oxopropanoate + NAD(+) + CoA + H2O = hydrogencarbonate + acetyl-CoA + NADH + H(+). The enzyme catalyses 2-methyl-3-oxopropanoate + NAD(+) + CoA + H2O = propanoyl-CoA + hydrogencarbonate + NADH + H(+). Its pathway is polyol metabolism; myo-inositol degradation into acetyl-CoA; acetyl-CoA from myo-inositol: step 7/7. Functionally, catalyzes the oxidation of malonate semialdehyde (MSA) and methylmalonate semialdehyde (MMSA) into acetyl-CoA and propanoyl-CoA, respectively. Is involved in a myo-inositol catabolic pathway. Bicarbonate, and not CO2, is the end-product of the enzymatic reaction. This chain is Malonate-semialdehyde dehydrogenase, found in Listeria monocytogenes serotype 4a (strain HCC23).